The chain runs to 455 residues: tRNA modification GTPase MnmE (455 aa).

(6S)-5-formyl-5,6,7,8-tetrahydrofolate-binding residues include arginine 25, glutamate 85, and arginine 124. In terms of domain architecture, TrmE-type G spans 221 to 375 (GLSTAIIGRP…IEERINKLFF (155 aa)). Asparagine 231 provides a ligand contact to K(+). Residues 231 to 236 (NVGKSS), 250 to 256 (TDIEGTT), and 275 to 278 (DTAG) each bind GTP. Residue serine 235 participates in Mg(2+) binding. K(+) contacts are provided by threonine 250, isoleucine 252, and threonine 255. Threonine 256 provides a ligand contact to Mg(2+). Lysine 455 provides a ligand contact to (6S)-5-formyl-5,6,7,8-tetrahydrofolate.

This sequence belongs to the TRAFAC class TrmE-Era-EngA-EngB-Septin-like GTPase superfamily. TrmE GTPase family. Homodimer. Heterotetramer of two MnmE and two MnmG subunits. K(+) serves as cofactor.

Its subcellular location is the cytoplasm. Functionally, exhibits a very high intrinsic GTPase hydrolysis rate. Involved in the addition of a carboxymethylaminomethyl (cmnm) group at the wobble position (U34) of certain tRNAs, forming tRNA-cmnm(5)s(2)U34. This chain is tRNA modification GTPase MnmE, found in Streptococcus mutans serotype c (strain ATCC 700610 / UA159).